Reading from the N-terminus, the 851-residue chain is DNA mismatch repair protein MutS (851 aa).

ATP is bound at residue 602–609 (GPNMSGKS).

Belongs to the DNA mismatch repair MutS family.

This protein is involved in the repair of mismatches in DNA. It is possible that it carries out the mismatch recognition step. This protein has a weak ATPase activity. This Streptococcus equi subsp. equi (strain 4047) protein is DNA mismatch repair protein MutS.